A 433-amino-acid chain; its full sequence is Pyrimidine-nucleoside phosphorylase (433 aa).

81-83 (KHS) is a binding site for phosphate. K(+) is bound by residues G88 and T90. Residues T92, 108 to 110 (KMS), and T120 each bind phosphate. Substrate is bound by residues R168 and K187. The K(+) site is built by L243, A246, and E255.

This sequence belongs to the thymidine/pyrimidine-nucleoside phosphorylase family. As to quaternary structure, homodimer. The cofactor is K(+).

It carries out the reaction uridine + phosphate = alpha-D-ribose 1-phosphate + uracil. The catalysed reaction is thymidine + phosphate = 2-deoxy-alpha-D-ribose 1-phosphate + thymine. It catalyses the reaction 2'-deoxyuridine + phosphate = 2-deoxy-alpha-D-ribose 1-phosphate + uracil. Its function is as follows. Catalyzes phosphorolysis of the pyrimidine nucleosides uridine, thymidine and 2'-deoxyuridine with the formation of the corresponding pyrimidine base and ribose-1-phosphate. This is Pyrimidine-nucleoside phosphorylase (pdp) from Geobacillus stearothermophilus (Bacillus stearothermophilus).